Here is a 387-residue protein sequence, read N- to C-terminus: Alpha-sarcoglycan (387 aa).

The N-terminal stretch at 1–23 (MAAAVTWIPLLAGLLAGLRDTKA) is a signal peptide. The Extracellular portion of the chain corresponds to 24–293 (QQTTLHLLVG…RDFLTDALVT (270 aa)). Residues asparagine 174 and asparagine 246 are each glycosylated (N-linked (GlcNAc...) asparagine). The chain crosses the membrane as a helical span at residues 294 to 314 (LLVPLLVALLLTLLLAYIMCF). Topologically, residues 315-387 (RREGRLKRDM…AQMPLILDQH (73 aa)) are cytoplasmic. Serine 377 carries the post-translational modification Phosphoserine.

The protein belongs to the sarcoglycan alpha/epsilon family. As to quaternary structure, cross-link to form 2 major subcomplexes: one consisting of SGCB, SGCD and SGCG and the other consisting of SGCB and SGCD. The association between SGCB and SGCG is particularly strong while SGCA is loosely associated with the other sarcoglycans. Interacts with the syntrophin SNTA1. In terms of tissue distribution, striated muscle, both skeletal and cardiac.

The protein resides in the cell membrane. It is found in the sarcolemma. Its subcellular location is the cytoplasm. The protein localises to the cytoskeleton. In terms of biological role, component of the sarcoglycan complex, a subcomplex of the dystrophin-glycoprotein complex which forms a link between the F-actin cytoskeleton and the extracellular matrix. The chain is Alpha-sarcoglycan (Sgca) from Mus musculus (Mouse).